The chain runs to 188 residues: Probable nicotinate-nucleotide adenylyltransferase (188 aa).

The protein belongs to the NadD family.

It catalyses the reaction nicotinate beta-D-ribonucleotide + ATP + H(+) = deamido-NAD(+) + diphosphate. It participates in cofactor biosynthesis; NAD(+) biosynthesis; deamido-NAD(+) from nicotinate D-ribonucleotide: step 1/1. Functionally, catalyzes the reversible adenylation of nicotinate mononucleotide (NaMN) to nicotinic acid adenine dinucleotide (NaAD). The chain is Probable nicotinate-nucleotide adenylyltransferase from Listeria monocytogenes serotype 4a (strain HCC23).